Here is a 604-residue protein sequence, read N- to C-terminus: Elongation factor 4 (604 aa).

The region spanning 7 to 189 is the tr-type G domain; the sequence is SKIRNFCIIA…SIVHLVPPPS (183 aa). Residues 19–24 and 136–139 contribute to the GTP site; these read DHGKST and NKID.

The protein belongs to the TRAFAC class translation factor GTPase superfamily. Classic translation factor GTPase family. LepA subfamily.

Its subcellular location is the cell inner membrane. It catalyses the reaction GTP + H2O = GDP + phosphate + H(+). In terms of biological role, required for accurate and efficient protein synthesis under certain stress conditions. May act as a fidelity factor of the translation reaction, by catalyzing a one-codon backward translocation of tRNAs on improperly translocated ribosomes. Back-translocation proceeds from a post-translocation (POST) complex to a pre-translocation (PRE) complex, thus giving elongation factor G a second chance to translocate the tRNAs correctly. Binds to ribosomes in a GTP-dependent manner. This chain is Elongation factor 4, found in Synechococcus elongatus (strain ATCC 33912 / PCC 7942 / FACHB-805) (Anacystis nidulans R2).